Here is a 642-residue protein sequence, read N- to C-terminus: DNA primase (642 aa).

The segment at 41 to 65 adopts a CHC2-type zinc-finger fold; that stretch reads CPFHNEKSPSFHVRPNHGHFHCFGC. The Toprim domain occupies 262–348; it reads HQAVVVEGYT…AGKSFVAVAA (87 aa). Residues E268, D319, and D321 each contribute to the Mg(2+) site. The interval 445-480 is disordered; that stretch reads NRRSVPERTRRRSVSVEQSPFMQPPGAPADQLAARP.

It belongs to the DnaG primase family. Monomer. Interacts with DnaB. The cofactor is Zn(2+). Mg(2+) is required as a cofactor.

The enzyme catalyses ssDNA + n NTP = ssDNA/pppN(pN)n-1 hybrid + (n-1) diphosphate.. Its function is as follows. RNA polymerase that catalyzes the synthesis of short RNA molecules used as primers for DNA polymerase during DNA replication. This Mycobacterium leprae (strain TN) protein is DNA primase.